The chain runs to 374 residues: tRNA-specific 2-thiouridylase MnmA (374 aa).

Residues 15 to 22 (GMSGGVDS) and M41 each bind ATP. The segment at 101 to 103 (NPD) is interaction with target base in tRNA. The active-site Nucleophile is C106. C106 and C203 are disulfide-bonded. Position 130 (G130) interacts with ATP. Residues 153–155 (KDQ) form an interaction with tRNA region. Catalysis depends on C203, which acts as the Cysteine persulfide intermediate. The interval 311 to 312 (RY) is interaction with tRNA.

This sequence belongs to the MnmA/TRMU family.

Its subcellular location is the cytoplasm. It catalyses the reaction S-sulfanyl-L-cysteinyl-[protein] + uridine(34) in tRNA + AH2 + ATP = 2-thiouridine(34) in tRNA + L-cysteinyl-[protein] + A + AMP + diphosphate + H(+). Functionally, catalyzes the 2-thiolation of uridine at the wobble position (U34) of tRNA, leading to the formation of s(2)U34. In Lysinibacillus sphaericus (strain C3-41), this protein is tRNA-specific 2-thiouridylase MnmA.